The chain runs to 301 residues: UDP-N-acetylenolpyruvoylglucosamine reductase 1 (301 aa).

Positions 29 to 196 constitute an FAD-binding PCMH-type domain; sequence KIGGPADILI…LEAVFQLQAG (168 aa). Arg174 is a catalytic residue. Ser225 functions as the Proton donor in the catalytic mechanism. Glu295 is a catalytic residue.

Belongs to the MurB family. Requires FAD as cofactor.

It is found in the cytoplasm. The catalysed reaction is UDP-N-acetyl-alpha-D-muramate + NADP(+) = UDP-N-acetyl-3-O-(1-carboxyvinyl)-alpha-D-glucosamine + NADPH + H(+). It participates in cell wall biogenesis; peptidoglycan biosynthesis. Cell wall formation. The sequence is that of UDP-N-acetylenolpyruvoylglucosamine reductase 1 (murB1) from Bacillus cereus (strain ATCC 14579 / DSM 31 / CCUG 7414 / JCM 2152 / NBRC 15305 / NCIMB 9373 / NCTC 2599 / NRRL B-3711).